Consider the following 224-residue polypeptide: V-type proton ATPase subunit S1-like protein (224 aa).

Residues 147–167 (PAFLIGLAMSLILLLVLAYAL) form a helical membrane-spanning segment.

This sequence belongs to the vacuolar ATPase subunit S1 family.

The protein localises to the membrane. This Homo sapiens (Human) protein is V-type proton ATPase subunit S1-like protein (ATP6AP1L).